A 200-amino-acid chain; its full sequence is Pyridoxal 5'-phosphate synthase subunit PdxT (200 aa).

Residue 50–52 (GES) participates in L-glutamine binding. Cysteine 82 serves as the catalytic Nucleophile. L-glutamine-binding positions include arginine 110 and 138-139 (IR). Active-site charge relay system residues include histidine 174 and glutamate 176.

The protein belongs to the glutaminase PdxT/SNO family. In terms of assembly, in the presence of PdxS, forms a dodecamer of heterodimers. Only shows activity in the heterodimer.

The enzyme catalyses aldehydo-D-ribose 5-phosphate + D-glyceraldehyde 3-phosphate + L-glutamine = pyridoxal 5'-phosphate + L-glutamate + phosphate + 3 H2O + H(+). It carries out the reaction L-glutamine + H2O = L-glutamate + NH4(+). Its pathway is cofactor biosynthesis; pyridoxal 5'-phosphate biosynthesis. Catalyzes the hydrolysis of glutamine to glutamate and ammonia as part of the biosynthesis of pyridoxal 5'-phosphate. The resulting ammonia molecule is channeled to the active site of PdxS. In Oceanobacillus iheyensis (strain DSM 14371 / CIP 107618 / JCM 11309 / KCTC 3954 / HTE831), this protein is Pyridoxal 5'-phosphate synthase subunit PdxT.